Consider the following 629-residue polypeptide: Ionotropic receptor 75a (629 aa).

The Extracellular portion of the chain corresponds to 1–335 (MQLVQLANFV…GDVFLQPFSP (335 aa)). 6 N-linked (GlcNAc...) asparagine glycosylation sites follow: Asn61, Asn112, Asn126, Asn144, Asn166, and Asn232. Residues 336-356 (LVWYLFGGVLSLIGVLLWITF) form a helical membrane-spanning segment. The Cytoplasmic portion of the chain corresponds to 357–374 (YMECKRMQKRWRLDYLPS). A helical transmembrane segment spans residues 375-395 (LLSTFLISFGAACIQSSSLIP). The Extracellular portion of the chain corresponds to 396-402 (RSAGGRL). The helical transmembrane segment at 403–423 (IYFALFLISFIMYNYYTSVVV) threads the bilayer. Over 424 to 592 (SSLLSSPVKS…NFVITVGMEY (169 aa)) the chain is Cytoplasmic. A helical transmembrane segment spans residues 593 to 613 (VAPLLLMLICADILVVVILLV). Topologically, residues 614–629 (ELAWKRFFTRPLTIHP) are extracellular.

This sequence belongs to the glutamate-gated ion channel (TC 1.A.10.1) family. In terms of tissue distribution, expressed in neurons in the antennal coeloconic 2 (ac2) sensillum class of sensory hairs (at protein level).

It localises to the cell membrane. Its subcellular location is the cell projection. The protein localises to the dendrite. Its function is as follows. Olfactory receptor for propionic, butyric and 2-oxopentanoic acids. This Drosophila sechellia (Fruit fly) protein is Ionotropic receptor 75a.